The primary structure comprises 477 residues: Cyclin-A1-2 (477 aa).

This sequence belongs to the cyclin family. Cyclin AB subfamily.

This Oryza sativa subsp. japonica (Rice) protein is Cyclin-A1-2 (CYCA1-2).